Here is a 387-residue protein sequence, read N- to C-terminus: Phosphoglycerate kinase (387 aa).

Substrate is bound by residues 21-23 (DLN), Arg-36, 59-62 (HLGR), Arg-113, and Arg-146. Residues Lys-197, Glu-314, and 340 to 343 (GGDT) each bind ATP.

The protein belongs to the phosphoglycerate kinase family. As to quaternary structure, monomer.

The protein resides in the cytoplasm. The catalysed reaction is (2R)-3-phosphoglycerate + ATP = (2R)-3-phospho-glyceroyl phosphate + ADP. Its pathway is carbohydrate degradation; glycolysis; pyruvate from D-glyceraldehyde 3-phosphate: step 2/5. This Pseudomonas syringae pv. tomato (strain ATCC BAA-871 / DC3000) protein is Phosphoglycerate kinase.